A 217-amino-acid chain; its full sequence is Uracil-DNA glycosylase (217 aa).

Aspartate 62 acts as the Proton acceptor in catalysis.

The protein belongs to the uracil-DNA glycosylase (UDG) superfamily. UNG family.

It is found in the cytoplasm. It carries out the reaction Hydrolyzes single-stranded DNA or mismatched double-stranded DNA and polynucleotides, releasing free uracil.. In terms of biological role, excises uracil residues from the DNA which can arise as a result of misincorporation of dUMP residues by DNA polymerase or due to deamination of cytosine. This is Uracil-DNA glycosylase from Streptococcus pyogenes serotype M18 (strain MGAS8232).